Consider the following 465-residue polypeptide: Midnolin (465 aa).

Positions 32–106 (MSLAIHSTTG…LTLVPTVEAG (75 aa)) constitute a Ubiquitin-like domain. Disordered stretches follow at residues 185-262 (SVAT…SRKP) and 400-445 (RLRR…GLDF). Low complexity-rich tracts occupy residues 195–219 (RPVSSAARVPPVSSSPSSPVSPSPV) and 240–257 (SPPASSSSTSTPGSSPTP). Residues 397 to 424 (QQKRLRRKARRDARGPYHWTPSRKAGRS) form a required for nucleolar localization region.

Interacts with GCK; the interaction occurs preferentially at low glucose levels. Interacts with the proteasome. In terms of tissue distribution, expressed at high levels in brain and liver with significantly lower levels in muscle.

Its subcellular location is the nucleus. It localises to the cytoplasm. The protein localises to the cytosol. It is found in the nucleolus. Facilitates the ubiquitin-independent proteasomal degradation of stimulus-induced transcription factors such as FOSB, EGR1, NR4A1, and IRF4 to the proteasome for degradation. Promotes also the degradation of other substrates such as CBX4. Plays a role in inhibiting the activity of glucokinase GCK and both glucose-induced and basal insulin secretion. The chain is Midnolin (Midn) from Mus musculus (Mouse).